We begin with the raw amino-acid sequence, 155 residues long: SsrA-binding protein (155 aa).

The protein belongs to the SmpB family.

The protein localises to the cytoplasm. In terms of biological role, required for rescue of stalled ribosomes mediated by trans-translation. Binds to transfer-messenger RNA (tmRNA), required for stable association of tmRNA with ribosomes. tmRNA and SmpB together mimic tRNA shape, replacing the anticodon stem-loop with SmpB. tmRNA is encoded by the ssrA gene; the 2 termini fold to resemble tRNA(Ala) and it encodes a 'tag peptide', a short internal open reading frame. During trans-translation Ala-aminoacylated tmRNA acts like a tRNA, entering the A-site of stalled ribosomes, displacing the stalled mRNA. The ribosome then switches to translate the ORF on the tmRNA; the nascent peptide is terminated with the 'tag peptide' encoded by the tmRNA and targeted for degradation. The ribosome is freed to recommence translation, which seems to be the essential function of trans-translation. This Bordetella bronchiseptica (strain ATCC BAA-588 / NCTC 13252 / RB50) (Alcaligenes bronchisepticus) protein is SsrA-binding protein.